We begin with the raw amino-acid sequence, 378 residues long: Glutamate 5-kinase (378 aa).

Lys-19 is a binding site for ATP. Substrate is bound by residues Ser-59, Asp-146, and Asn-158. Residues 178 to 179 (TD) and 220 to 226 (TGGMATK) contribute to the ATP site. In terms of domain architecture, PUA spans 285–363 (QGQIQVDAGA…GEIGEILGYK (79 aa)).

This sequence belongs to the glutamate 5-kinase family.

The protein resides in the cytoplasm. It carries out the reaction L-glutamate + ATP = L-glutamyl 5-phosphate + ADP. It functions in the pathway amino-acid biosynthesis; L-proline biosynthesis; L-glutamate 5-semialdehyde from L-glutamate: step 1/2. Its function is as follows. Catalyzes the transfer of a phosphate group to glutamate to form L-glutamate 5-phosphate. In Moorella thermoacetica (strain ATCC 39073 / JCM 9320), this protein is Glutamate 5-kinase.